Reading from the N-terminus, the 331-residue chain is Probable transaldolase (331 aa).

Lys142 serves as the catalytic Schiff-base intermediate with substrate.

Belongs to the transaldolase family. Type 1 subfamily. As to quaternary structure, homodimer.

Its subcellular location is the cytoplasm. The catalysed reaction is D-sedoheptulose 7-phosphate + D-glyceraldehyde 3-phosphate = D-erythrose 4-phosphate + beta-D-fructose 6-phosphate. The protein operates within carbohydrate degradation; pentose phosphate pathway; D-glyceraldehyde 3-phosphate and beta-D-fructose 6-phosphate from D-ribose 5-phosphate and D-xylulose 5-phosphate (non-oxidative stage): step 2/3. Transaldolase is important for the balance of metabolites in the pentose-phosphate pathway. The polypeptide is Probable transaldolase (Drosophila melanogaster (Fruit fly)).